A 95-amino-acid chain; its full sequence is Blastocyst protein 4 (95 aa).

The N-terminal stretch at 1-20 is a signal peptide; that stretch reads MGAVFAIIGGFALDSPILRL.

The protein is Blastocyst protein 4 of Oryctolagus cuniculus (Rabbit).